We begin with the raw amino-acid sequence, 328 residues long: MGLLRRRLLLLVVVVTTCVPASQGLRCIQCESNQDCLVEECALGQDLCRTTVLREWEDAEELEVVTRGCAHKEKTNRTMSYRMGSVIVSLTETVCATNLCNRPRPGARGRPFPRGRYLECASCTSLDQSCERGREQSLQCRYPTEHCIEVVTLQSTERSVKDEPYTKGCGSLPGCPGTAGFHSNQTFHFLKCCNFTQCNGGPVLDLQSLPPNGFQCYSCEGNSTFGCSYEETSLIDCRGPMNQCLEATGLDVLGNRSYTVRGCATASWCQGSHVADSFQTHVNLSISCCNGSGCNRPTGGAPGPGPAHLILIASLLLTLRLWGIPLWT.

Residues 1 to 24 form the signal peptide; sequence MGLLRRRLLLLVVVVTTCVPASQG. UPAR/Ly6 domains lie at 25–118, 118–213, and 214–299; these read LRCI…GRYL, LECA…PPNG, and FQCY…RPTG. Cystine bridges form between cysteine 27–cysteine 48, cysteine 30–cysteine 36, and cysteine 41–cysteine 69. An N-linked (GlcNAc...) asparagine glycan is attached at asparagine 76. Intrachain disulfides connect cysteine 95/cysteine 100, cysteine 120/cysteine 147, cysteine 123/cysteine 130, cysteine 140/cysteine 169, cysteine 175/cysteine 192, cysteine 193/cysteine 198, cysteine 216/cysteine 244, cysteine 219/cysteine 227, cysteine 237/cysteine 263, cysteine 269/cysteine 288, and cysteine 289/cysteine 294. Residues asparagine 184, asparagine 194, asparagine 222, asparagine 255, asparagine 283, and asparagine 290 are each glycosylated (N-linked (GlcNAc...) asparagine). Glycine 299 carries GPI-anchor amidated glycine lipidation. Residues 300 to 328 constitute a propeptide, removed in mature form; the sequence is GAPGPGPAHLILIASLLLTLRLWGIPLWT.

Monomer. Interacts (via the UPAR/Ly6 domains) with SRPX2. Interacts with MRC2. Interacts with SORL1 (via N-terminal ectodomain); this interaction decreases PLAUR internalization. The ternary complex composed of PLAUR-PLAU-SERPINE1 also interacts with SORL1. Interacts with CD82; this interaction prevents PLAUR from binding to its high affinity ligand PLAU.

Its subcellular location is the cell membrane. The protein resides in the secreted. Functionally, acts as a receptor for urokinase plasminogen activator. Plays a role in localizing and promoting plasmin formation. Mediates the proteolysis-independent signal transduction activation effects of U-PA. This Rattus norvegicus (Rat) protein is Urokinase plasminogen activator surface receptor (Plaur).